A 359-amino-acid polypeptide reads, in one-letter code: tRNA-specific 2-thiouridylase MnmA (359 aa).

ATP is bound by residues 9-16 (GISGGVDS) and Met35. The tract at residues 95-97 (NPD) is interaction with target base in tRNA. Residue Cys100 is the Nucleophile of the active site. Cys100 and Cys197 are disulfide-bonded. An ATP-binding site is contributed by Gly124. The interaction with tRNA stretch occupies residues 147 to 149 (KDQ). Cys197 acts as the Cysteine persulfide intermediate in catalysis. The tract at residues 309 to 310 (RY) is interaction with tRNA.

It belongs to the MnmA/TRMU family.

The protein resides in the cytoplasm. It catalyses the reaction S-sulfanyl-L-cysteinyl-[protein] + uridine(34) in tRNA + AH2 + ATP = 2-thiouridine(34) in tRNA + L-cysteinyl-[protein] + A + AMP + diphosphate + H(+). Functionally, catalyzes the 2-thiolation of uridine at the wobble position (U34) of tRNA, leading to the formation of s(2)U34. The sequence is that of tRNA-specific 2-thiouridylase MnmA from Francisella tularensis subsp. tularensis (strain WY96-3418).